The sequence spans 321 residues: Aldose reductase C (321 aa).

22–31 (GNQIPSIGLG) lines the NADP(+) pocket. Catalysis depends on Y62, which acts as the Proton donor. Residue H124 coordinates substrate. 227–281 (SPLGQGKCDFFSNKILKSIAGKYKKSVANVIFKWLNQRGIAAIPKSGNHSRIIEN) lines the NADP(+) pocket.

The protein belongs to the aldo/keto reductase family.

It catalyses the reaction an alditol + NAD(+) = an aldose + NADH + H(+). The enzyme catalyses an alditol + NADP(+) = an aldose + NADPH + H(+). Its function is as follows. Catalyzes the NADPH-dependent reduction of a wide variety of carbonyl-containing compounds to their corresponding alcohols with a broad range of catalytic efficiencies. The chain is Aldose reductase C (alrC) from Dictyostelium discoideum (Social amoeba).